The chain runs to 338 residues: Ketol-acid reductoisomerase (NADP(+)) (338 aa).

Residues 1–181 (MQIFYDKDCD…GGGRTGIIET (181 aa)) form the KARI N-terminal Rossmann domain. NADP(+)-binding positions include 24–27 (YGSQ), R47, S50, S52, and 82–85 (DEFQ). H107 is an active-site residue. Position 133 (G133) interacts with NADP(+). The 146-residue stretch at 182–327 (SFREETETDL…SKLRAMMPWI (146 aa)) folds into the KARI C-terminal knotted domain. Mg(2+) contacts are provided by D190, E194, E226, and E230. S251 serves as a coordination point for substrate.

Belongs to the ketol-acid reductoisomerase family. The cofactor is Mg(2+).

It catalyses the reaction (2R)-2,3-dihydroxy-3-methylbutanoate + NADP(+) = (2S)-2-acetolactate + NADPH + H(+). The enzyme catalyses (2R,3R)-2,3-dihydroxy-3-methylpentanoate + NADP(+) = (S)-2-ethyl-2-hydroxy-3-oxobutanoate + NADPH + H(+). The protein operates within amino-acid biosynthesis; L-isoleucine biosynthesis; L-isoleucine from 2-oxobutanoate: step 2/4. It functions in the pathway amino-acid biosynthesis; L-valine biosynthesis; L-valine from pyruvate: step 2/4. Functionally, involved in the biosynthesis of branched-chain amino acids (BCAA). Catalyzes an alkyl-migration followed by a ketol-acid reduction of (S)-2-acetolactate (S2AL) to yield (R)-2,3-dihydroxy-isovalerate. In the isomerase reaction, S2AL is rearranged via a Mg-dependent methyl migration to produce 3-hydroxy-3-methyl-2-ketobutyrate (HMKB). In the reductase reaction, this 2-ketoacid undergoes a metal-dependent reduction by NADPH to yield (R)-2,3-dihydroxy-isovalerate. This Acinetobacter baylyi (strain ATCC 33305 / BD413 / ADP1) protein is Ketol-acid reductoisomerase (NADP(+)).